The primary structure comprises 404 residues: cAMP-dependent protein kinase regulatory subunit (404 aa).

The tract at residues 14 to 144 is dimerization and phosphorylation; that stretch reads LTDHELLRIP…RLKTAIAGNF (131 aa). S105 is modified (phosphoserine). 3',5'-cyclic AMP is bound by residues 145-276, E223, R232, 277-398, E344, and R353; these read LFSH…EKFP and CCRH…GVEE.

This sequence belongs to the cAMP-dependent kinase regulatory chain family. Tetramer, composed of 2 regulatory (R) and 2 catalytic (C) subunits. In the presence of cAMP it dissociates into 2 active monomeric C subunits and an R dimer.

In terms of biological role, cAMP-dependent protein kinase PKA regulatory subunit. The chain is cAMP-dependent protein kinase regulatory subunit (PKAR) from Colletotrichum trifolii.